A 359-amino-acid chain; its full sequence is Proton-gated ion channel (359 aa).

A signal peptide spans 1 to 43; that stretch reads MFPTGWRPKLSESIAASRMLWQPMAAVAVVQIGLLWFSPPVWG. Residues 44–235 lie on the Periplasmic side of the membrane; sequence QDMVSPPPPI…LDYQLRISRQ (192 aa). A helical transmembrane segment spans residues 236–258; it reads YFSYIPNIILPMLFILFISWTAF. Topologically, residues 259–261 are cytoplasmic; the sequence is WST. The chain crosses the membrane as a helical span at residues 262 to 286; that stretch reads SYEANVTLVVSTLIAHIAFNILVET. Residues 287–294 lie on the Periplasmic side of the membrane; it reads NLPKTPYM. A helical transmembrane segment spans residues 295-323; the sequence is TYTGAIIFMIYLFYFVAVIEVTVQHYLKV. Topologically, residues 324 to 326 are cytoplasmic; that stretch reads ESQ. The helical transmembrane segment at 327-359 threads the bilayer; sequence PARAASITRASRIAFPVVFLLANIILAFLFFGF.

This sequence belongs to the ligand-gated ion channel (TC 1.A.9) family. As to quaternary structure, homopentamer.

The protein resides in the cell inner membrane. Tetraethylammonium (TEA) and tetrabutylammonium (TBA) inhibit the proton-activated currents in a dose- and voltage-dependent manner in vitro, whereas the blocker of acid sensing ion channels, amiloride, has no effect. Channel current of GLIC can be inhibited by inhaled and intravenous general anesthetics at and below concentrations used clinically. Ion conduction is also inhibited by lidocaine and by divalent transition metal ions such as cadmium ions. Functionally, cationic channel with similar permeabilities for Na(+) and K(+), that is activated by an increase of the proton concentration on the extracellular side. Displays no permeability for chloride ions. Shows slow kinetics of activation, no desensitization and a single channel conductance of 8 pS. Might contribute to adaptation to external pH change. The sequence is that of Proton-gated ion channel (glvI) from Gloeobacter violaceus (strain ATCC 29082 / PCC 7421).